The primary structure comprises 503 residues: uncharacterized protein (503 aa).

Composition is skewed to basic and acidic residues over residues 1–23 and 203–215; these read MAHEGPRQVRDRGMTRSKAEKVR and PLEKLGDQSRSDQ. Disordered stretches follow at residues 1-29 and 149-227; these read MAHEGPRQVRDRGMTRSKAEKVRPPTVPV and ETFQ…SNSS. 2 positions are modified to phosphoserine: serine 239 and serine 243. Disordered regions lie at residues 346 to 370 and 450 to 475; these read LDPARLPRPDMARSPSPKLWPGAKW and LLSSSEPQRNDREGSASPPIHTGAPK. Residues 347-356 are compositionally biased toward basic and acidic residues; sequence DPARLPRPDM.

This is an uncharacterized protein from Bos taurus (Bovine).